We begin with the raw amino-acid sequence, 132 residues long: Small ribosomal subunit protein eS12 (132 aa).

The protein belongs to the eukaryotic ribosomal protein eS12 family.

The polypeptide is Small ribosomal subunit protein eS12 (rps12) (Oreochromis niloticus (Nile tilapia)).